The following is a 220-amino-acid chain: Uracil-DNA glycosylase (220 aa).

Residue aspartate 60 is the Proton acceptor of the active site.

This sequence belongs to the uracil-DNA glycosylase (UDG) superfamily. UNG family.

The protein resides in the cytoplasm. The catalysed reaction is Hydrolyzes single-stranded DNA or mismatched double-stranded DNA and polynucleotides, releasing free uracil.. Its function is as follows. Excises uracil residues from the DNA which can arise as a result of misincorporation of dUMP residues by DNA polymerase or due to deamination of cytosine. The polypeptide is Uracil-DNA glycosylase (Francisella tularensis subsp. holarctica (strain FTNF002-00 / FTA)).